A 324-amino-acid polypeptide reads, in one-letter code: dITP/XTP pyrophosphatase (324 aa).

Residues 1–126 (MTKSIFEYKD…SDNKSDFGDV (126 aa)) are unknown. Positions 127-324 (LLIATRNEGK…EVFPAWQNKQ (198 aa)) are NTP pyrophosphatase. 131–136 (TRNEGK) is a substrate binding site. The Proton acceptor role is filled by aspartate 193. Aspartate 193 is a binding site for Mg(2+). Substrate is bound by residues serine 194, 277-280 (FGYD), lysine 300, and 305-306 (HR).

Belongs to the HAM1 NTPase family. As to quaternary structure, homodimer. It depends on Mg(2+) as a cofactor.

The catalysed reaction is XTP + H2O = XMP + diphosphate + H(+). It catalyses the reaction dITP + H2O = dIMP + diphosphate + H(+). The enzyme catalyses ITP + H2O = IMP + diphosphate + H(+). Its function is as follows. Pyrophosphatase that catalyzes the hydrolysis of nucleoside triphosphates to their monophosphate derivatives, with a high preference for the non-canonical purine nucleotides XTP (xanthosine triphosphate), dITP (deoxyinosine triphosphate) and ITP. Seems to function as a house-cleaning enzyme that removes non-canonical purine nucleotides from the nucleotide pool, thus preventing their incorporation into DNA/RNA and avoiding chromosomal lesions. The sequence is that of dITP/XTP pyrophosphatase from Streptococcus thermophilus (strain ATCC BAA-250 / LMG 18311).